The primary structure comprises 145 residues: Small ribosomal subunit protein eS19 (145 aa).

The protein belongs to the eukaryotic ribosomal protein eS19 family. Part of the 30S ribosomal subunit.

Functionally, may be involved in maturation of the 30S ribosomal subunit. The sequence is that of Small ribosomal subunit protein eS19 from Methanothermobacter thermautotrophicus (strain ATCC 29096 / DSM 1053 / JCM 10044 / NBRC 100330 / Delta H) (Methanobacterium thermoautotrophicum).